Reading from the N-terminus, the 69-residue chain is DNA gyrase inhibitor YacG (69 aa).

The Zn(2+) site is built by Cys14, Cys17, Cys33, and Cys37.

This sequence belongs to the DNA gyrase inhibitor YacG family. As to quaternary structure, interacts with GyrB. It depends on Zn(2+) as a cofactor.

Its function is as follows. Inhibits all the catalytic activities of DNA gyrase by preventing its interaction with DNA. Acts by binding directly to the C-terminal domain of GyrB, which probably disrupts DNA binding by the gyrase. The polypeptide is DNA gyrase inhibitor YacG (Aliivibrio salmonicida (strain LFI1238) (Vibrio salmonicida (strain LFI1238))).